The primary structure comprises 110 residues: Membrane-associated protein slr1513 (110 aa).

Its subcellular location is the cellular thylakoid membrane. It localises to the cell membrane. In Synechocystis sp. (strain ATCC 27184 / PCC 6803 / Kazusa), this protein is Membrane-associated protein slr1513.